Here is a 336-residue protein sequence, read N- to C-terminus: Ferrochelatase (336 aa).

Fe cation contacts are provided by His-206 and Glu-287.

Belongs to the ferrochelatase family.

It localises to the cytoplasm. It carries out the reaction heme b + 2 H(+) = protoporphyrin IX + Fe(2+). It participates in porphyrin-containing compound metabolism; protoheme biosynthesis; protoheme from protoporphyrin-IX: step 1/1. Catalyzes the ferrous insertion into protoporphyrin IX. The protein is Ferrochelatase of Neisseria meningitidis serogroup A / serotype 4A (strain DSM 15465 / Z2491).